The sequence spans 251 residues: Arginine and glutamate-rich protein 1-A (251 aa).

Basic residues predominate over residues 1-48 (MGRSRSRSSSRSKHSKHSRKRSRSKSKSKKRSRSKEPKRNRRSRSRSG). The tract at residues 1–53 (MGRSRSRSSSRSKHSKHSRKRSRSKSKSKKRSRSKEPKRNRRSRSRSGSRRDR) is necessary and sufficient for RNA binding. Disordered regions lie at residues 1–92 (MGRS…ERQR) and 215–251 (RMKL…KATE). Composition is skewed to basic and acidic residues over residues 49–63 (SRRD…RTDM), 71–92 (RNND…ERQR), and 215–231 (RMKL…EEQK). Residues 54–251 (GGSPPDRTDM…RLSFSLKATE (198 aa)) form a necessary and sufficient for transcriptional regulation region.

Belongs to the ARGLU1 family.

It localises to the nucleus. The protein localises to the nucleus speckle. Its subcellular location is the chromosome. Functionally, dual function regulator of gene expression; regulator of transcription and modulator of alternative splicing. General coactivator of nuclear receptor-induced gene expression. The chain is Arginine and glutamate-rich protein 1-A (arglu1a) from Danio rerio (Zebrafish).